Reading from the N-terminus, the 1101-residue chain is Rho GTPase-activating protein 30 (1101 aa).

The Rho-GAP domain maps to 20-215 (CDLREHLQHS…FILTHVDQLF (196 aa)). 2 disordered regions span residues 305–397 (RKLP…VRAL) and 450–499 (LQPR…LEDS). The segment covering 309-319 (LRVEDREEKSS) has biased composition (basic and acidic residues). The span at 348-367 (SSSSQPSSLMPESLESNSME) shows a compositional bias: low complexity. Residues 451–465 (QPRPSPALGPGPPGS) are compositionally biased toward pro residues. S578 is subject to Phosphoserine. Residues 622–848 (LGPKPINWEG…EQKSIDVETE (227 aa)) form a disordered region. Composition is skewed to basic and acidic residues over residues 659–677 (TRQEKEAKPRSTSDNREEA), 686–762 (EAGK…KGDD), 786–821 (EVVHKHEAEKGRESETKELRRKSDLKSREDQGHSED), and 829–844 (DDRKEGVFSKEQKSID). Position 875 is a phosphoserine (S875). Disordered stretches follow at residues 878–901 (EINEQTSEMKQAPLQPSEPEGMEA) and 968–987 (CPRPGRLDGTPGEKAWGSRA). S996 carries the phosphoserine modification. The disordered stretch occupies residues 1044–1076 (SRPLSCLERPPEGTEGSEPRSRLSLPPRELHPV). The segment covering 1052–1064 (RPPEGTEGSEPRS) has biased composition (basic and acidic residues).

In terms of assembly, interacts with RHOU in a GTP-independent manner.

Its subcellular location is the cytoplasmic vesicle. Functionally, GTPase-activating protein (GAP) for RAC1 and RHOA, but not for CDC42. This is Rho GTPase-activating protein 30 (Arhgap30) from Mus musculus (Mouse).